The chain runs to 163 residues: Retinoic acid receptor responder protein 2 (163 aa).

An N-terminal signal peptide occupies residues 1–20 (MKYLLISLALWLGMVGIHGT). 3 disulfides stabilise this stretch: C79–C89, C100–C119, and C103–C135. Positions 158–163 (RALKHK) are excised as a propeptide.

Post-translationally, secreted in an inactive precursor form, prochemerin, which is proteolytically processed by a variety of extracellular proteases to generate forms with differing levels of bioactivity. For example, the removal of six amino acids results in chemerin-157, which exhibits the highest activity, while removal of seven amino acids results in chemerin-156 which has slightly less activity. Some proteases are able to cleave at more than one site and chemerin forms may be sequentially processed by different enzymes to modulate activity levels. The coordinated expression and activity of chemerin-modifying enzymes is essential for regulating its bioactivation, inactivation and, consequently, biological function. Cathepsin G cleaves seven C-terminal amino acids from prochemerin (chemerin-156), elastase is able to cleave six (chemerin-157), eight (chemerin-155) or eleven (chemerin-152), plasmin cleaves five amino acids (chemerin-158), and tryptase cleaves five (chemerin-158) or eight (chemerin-155). Multiple cleavages might be required to fully activate chemerin, with an initial tryptase cleavage resulting in chemerin with low activity (chemerin-158), and a second cleavage by carboxypeptidase N or B producing highly active chemerin (chemerin-157).

It localises to the secreted. Adipocyte-secreted protein (adipokine) that regulates adipogenesis, metabolism and inflammation through activation of the chemokine-like receptor 1 (CMKLR1). Also acts as a ligand for CMKLR2. Can also bind to C-C chemokine receptor-like 2 (CCRL2), but with a lower affinity than it does to CMKLR1 or CMKLR2. Positively regulates adipocyte differentiation, modulates the expression of adipocyte genes involved in lipid and glucose metabolism and might play a role in angiogenesis, a process essential for the expansion of white adipose tissue. Also acts as a pro-inflammatory adipokine, causing an increase in secretion of pro-inflammatory and prodiabetic adipokines, which further impair adipose tissue metabolic function and have negative systemic effects including impaired insulin sensitivity, altered glucose and lipid metabolism, and a decrease in vascular function in other tissues. Can have both pro- and anti-inflammatory properties depending on the modality of enzymatic cleavage by different classes of proteases. Acts as a chemotactic factor for leukocyte populations expressing CMKLR1, particularly immature plasmacytoid dendritic cells, but also immature myeloid DCs, macrophages and natural killer cells. Exerts an anti-inflammatory role by preventing TNF/TNFA-induced VCAM1 expression and monocytes adhesion in vascular endothelial cells. The effect is mediated via inhibiting activation of NF-kappa-B and CRK/p38 through stimulation of AKT1/NOS3 signaling and nitric oxide production. Its dual role in inflammation and metabolism might provide a link Exhibits an antimicrobial function in the skin. This chain is Retinoic acid receptor responder protein 2 (RARRES2), found in Cricetulus griseus (Chinese hamster).